The sequence spans 405 residues: Argininosuccinate synthase (405 aa).

ATP contacts are provided by residues 10–18 and Ala-37; that span reads AYSGGLDTS. Residues Tyr-88 and Ser-93 each contribute to the L-citrulline site. ATP is bound at residue Gly-118. Positions 120, 124, and 125 each coordinate L-aspartate. Residue Asn-124 coordinates L-citrulline. Arg-128, Ser-179, Ser-188, Glu-264, and Tyr-276 together coordinate L-citrulline.

Belongs to the argininosuccinate synthase family. Type 1 subfamily. Homotetramer.

It localises to the cytoplasm. The catalysed reaction is L-citrulline + L-aspartate + ATP = 2-(N(omega)-L-arginino)succinate + AMP + diphosphate + H(+). It functions in the pathway amino-acid biosynthesis; L-arginine biosynthesis; L-arginine from L-ornithine and carbamoyl phosphate: step 2/3. The protein is Argininosuccinate synthase of Pseudomonas fluorescens (strain SBW25).